A 348-amino-acid chain; its full sequence is Probable dual-specificity RNA methyltransferase RlmN (348 aa).

Residue Glu-92 is the Proton acceptor of the active site. A Radical SAM core domain is found at 98-331 (HPDRVTACIS…NEIRREKGTD (234 aa)). Cys-105 and Cys-336 are oxidised to a cystine. [4Fe-4S] cluster contacts are provided by Cys-112, Cys-116, and Cys-119. Residues 159-160 (GE), Ser-191, 214-216 (SLH), and Asn-290 contribute to the S-adenosyl-L-methionine site. Catalysis depends on Cys-336, which acts as the S-methylcysteine intermediate.

Belongs to the radical SAM superfamily. RlmN family. It depends on [4Fe-4S] cluster as a cofactor.

Its subcellular location is the cytoplasm. The enzyme catalyses adenosine(2503) in 23S rRNA + 2 reduced [2Fe-2S]-[ferredoxin] + 2 S-adenosyl-L-methionine = 2-methyladenosine(2503) in 23S rRNA + 5'-deoxyadenosine + L-methionine + 2 oxidized [2Fe-2S]-[ferredoxin] + S-adenosyl-L-homocysteine. It catalyses the reaction adenosine(37) in tRNA + 2 reduced [2Fe-2S]-[ferredoxin] + 2 S-adenosyl-L-methionine = 2-methyladenosine(37) in tRNA + 5'-deoxyadenosine + L-methionine + 2 oxidized [2Fe-2S]-[ferredoxin] + S-adenosyl-L-homocysteine. Functionally, specifically methylates position 2 of adenine 2503 in 23S rRNA and position 2 of adenine 37 in tRNAs. This is Probable dual-specificity RNA methyltransferase RlmN from Fervidobacterium nodosum (strain ATCC 35602 / DSM 5306 / Rt17-B1).